Reading from the N-terminus, the 496-residue chain is Galactokinase (496 aa).

Residue Ala2 is modified to N-acetylalanine. Residues Arg56, Glu62, His63, and Asp65 each contribute to the alpha-D-galactose site. Positions 161, 163, 165, and 166 each coordinate ATP. Asp210 contacts alpha-D-galactose. Asp210 (proton acceptor) is an active-site residue. ATP contacts are provided by Ser252, Gln253, and Lys254. Tyr262 contributes to the alpha-D-galactose binding site.

Belongs to the GHMP kinase family. GalK subfamily. Mg(2+) serves as cofactor. Requires Mn(2+) as cofactor. Ca(2+) is required as a cofactor. Expressed in roots, stems, leaves, flowers and young siliques. Higher expression in the elongating middle stem region than in the lower or upper stem region.

The enzyme catalyses alpha-D-galactose + ATP = alpha-D-galactose 1-phosphate + ADP + H(+). The protein operates within carbohydrate metabolism; galactose metabolism. Functionally, sugar-1-kinase with a very high substrate specificity for the alpha-anomeric configuration of D-galacose (D-Gal). Also efficiently converts 2-deoxy-D-Gal to 2-deoxy-D-al-1-phosphate. The protein is Galactokinase (GAL1) of Arabidopsis thaliana (Mouse-ear cress).